The sequence spans 361 residues: S-adenosylmethionine:tRNA ribosyltransferase-isomerase (361 aa).

Belongs to the QueA family. Monomer.

The protein resides in the cytoplasm. The enzyme catalyses 7-aminomethyl-7-carbaguanosine(34) in tRNA + S-adenosyl-L-methionine = epoxyqueuosine(34) in tRNA + adenine + L-methionine + 2 H(+). Its pathway is tRNA modification; tRNA-queuosine biosynthesis. Functionally, transfers and isomerizes the ribose moiety from AdoMet to the 7-aminomethyl group of 7-deazaguanine (preQ1-tRNA) to give epoxyqueuosine (oQ-tRNA). The protein is S-adenosylmethionine:tRNA ribosyltransferase-isomerase of Methylocella silvestris (strain DSM 15510 / CIP 108128 / LMG 27833 / NCIMB 13906 / BL2).